The primary structure comprises 340 residues: Melanin-concentrating hormone receptor 2 (340 aa).

Over 1–34 the chain is Extracellular; that stretch reads MNPFHSSCWNTSAELSNKSWNKEFAYQTASAVDT. 2 N-linked (GlcNAc...) asparagine glycosylation sites follow: N10 and N17. A helical membrane pass occupies residues 35-57; the sequence is VILPSMIGIICSTGLVGNILIVF. The Cytoplasmic segment spans residues 58-69; the sequence is TIIRSRKKTVPD. The helical transmembrane segment at 70–92 threads the bilayer; the sequence is IYICNLAVADLVHIIGMPFLIHQ. The Extracellular portion of the chain corresponds to 93-106; it reads WARGGEWVFGGPLC. A helical membrane pass occupies residues 107 to 129; sequence TIITSLDTCNQFACSAIMTVMSV. The Cytoplasmic segment spans residues 130–149; that stretch reads DRYFALVQPFRLTSWRTRYK. Residues 150 to 172 form a helical membrane-spanning segment; that stretch reads TIRINLGLWAASFILALPVWIYS. The Extracellular portion of the chain corresponds to 173 to 198; that stretch reads KVIKFKDGVESCAFDLTSPDDVLWYT. The helical transmembrane segment at 199-221 threads the bilayer; it reads LYLTITTFFFPLPLILVCYILIL. Topologically, residues 222-252 are cytoplasmic; that stretch reads CYTWEMYQQNKDARCCNPSVPKQRVMKLTKM. A helical membrane pass occupies residues 253 to 272; it reads VLVLVAVFILSAAPYHVIQL. Residues 273 to 286 lie on the Extracellular side of the membrane; that stretch reads VNLQMEQPTLAFYV. A helical membrane pass occupies residues 287 to 309; the sequence is GYYLSICLSYASSSINPFLYILL. At 310-340 the chain is on the cytoplasmic side; it reads SGNFQKRLPQIQRRVTDKEIKNMGNTLKSHF.

It belongs to the G-protein coupled receptor 1 family.

The protein localises to the cell membrane. Functionally, receptor for melanin-concentrating hormone, coupled to G proteins that activate phosphoinositide hydrolysis. This chain is Melanin-concentrating hormone receptor 2 (MCHR2), found in Macaca fascicularis (Crab-eating macaque).